Consider the following 473-residue polypeptide: Photosystem II CP43 reaction center protein (473 aa).

The propeptide occupies 1 to 14; that stretch reads MKTLYSLRRFYHVE. N-acetylthreonine is present on threonine 15. A Phosphothreonine modification is found at threonine 15. A run of 5 helical transmembrane segments spans residues 69–93, 134–155, 178–200, 255–275, and 291–312; these read LFEVAHFVPEKPMYEQGLILLPHLA, LLGPETLEESFPFFGYVWKDRN, KALYFGGVYDTWAPGGGDVRKIT, KPFAWARRAFVWSGEAYLSYS, and WFNNTAYPSEFYGPTGPEASQA. Residue glutamate 367 participates in [CaMn4O5] cluster binding. A helical transmembrane segment spans residues 447–471; the sequence is RARAAAAGFEKGIDRDFEPVLSMTP.

Belongs to the PsbB/PsbC family. PsbC subfamily. As to quaternary structure, PSII is composed of 1 copy each of membrane proteins PsbA, PsbB, PsbC, PsbD, PsbE, PsbF, PsbH, PsbI, PsbJ, PsbK, PsbL, PsbM, PsbT, PsbX, PsbY, PsbZ, Psb30/Ycf12, at least 3 peripheral proteins of the oxygen-evolving complex and a large number of cofactors. It forms dimeric complexes. It depends on Binds multiple chlorophylls and provides some of the ligands for the Ca-4Mn-5O cluster of the oxygen-evolving complex. It may also provide a ligand for a Cl- that is required for oxygen evolution. PSII binds additional chlorophylls, carotenoids and specific lipids. as a cofactor.

Its subcellular location is the plastid. The protein resides in the chloroplast thylakoid membrane. Its function is as follows. One of the components of the core complex of photosystem II (PSII). It binds chlorophyll and helps catalyze the primary light-induced photochemical processes of PSII. PSII is a light-driven water:plastoquinone oxidoreductase, using light energy to abstract electrons from H(2)O, generating O(2) and a proton gradient subsequently used for ATP formation. This chain is Photosystem II CP43 reaction center protein, found in Chloranthus spicatus (Chulantree).